A 1099-amino-acid chain; its full sequence is DNA-directed RNA polymerase subunit beta (1099 aa).

The protein belongs to the RNA polymerase beta chain family. As to quaternary structure, in plastids the minimal PEP RNA polymerase catalytic core is composed of four subunits: alpha, beta, beta', and beta''. When a (nuclear-encoded) sigma factor is associated with the core the holoenzyme is formed, which can initiate transcription.

It is found in the plastid. Its subcellular location is the chloroplast. It catalyses the reaction RNA(n) + a ribonucleoside 5'-triphosphate = RNA(n+1) + diphosphate. In terms of biological role, DNA-dependent RNA polymerase catalyzes the transcription of DNA into RNA using the four ribonucleoside triphosphates as substrates. In Bigelowiella natans (Pedinomonas minutissima), this protein is DNA-directed RNA polymerase subunit beta.